A 21-amino-acid polypeptide reads, in one-letter code: GMASTAGSVLGKLAKTAIGIL.

Residue leucine 21 is modified to Leucine amide.

As to expression, expressed by the skin glands.

Its subcellular location is the secreted. Functionally, antimicrobial peptide. The polypeptide is Peptide PGLa-R6 (Xenopus ruwenzoriensis (Uganda clawed frog)).